Here is a 968-residue protein sequence, read N- to C-terminus: RNA polymerase-associated protein RapA (968 aa).

Residues 164–334 (DVGRRHAPRV…FARLRLLDPN (171 aa)) enclose the Helicase ATP-binding domain. ATP is bound at residue 177 to 184 (DEVGLGKT). The short motif at 280–283 (DEAH) is the DEAH box element. The Helicase C-terminal domain maps to 490-644 (RVEWLMGYLT…TCPTGRAIYD (155 aa)).

The protein belongs to the SNF2/RAD54 helicase family. RapA subfamily. As to quaternary structure, interacts with the RNAP. Has a higher affinity for the core RNAP than for the holoenzyme. Its ATPase activity is stimulated by binding to RNAP.

In terms of biological role, transcription regulator that activates transcription by stimulating RNA polymerase (RNAP) recycling in case of stress conditions such as supercoiled DNA or high salt concentrations. Probably acts by releasing the RNAP, when it is trapped or immobilized on tightly supercoiled DNA. Does not activate transcription on linear DNA. Probably not involved in DNA repair. This chain is RNA polymerase-associated protein RapA, found in Salmonella arizonae (strain ATCC BAA-731 / CDC346-86 / RSK2980).